The primary structure comprises 110 residues: Large ribosomal subunit protein uL22 (110 aa).

It belongs to the universal ribosomal protein uL22 family. Part of the 50S ribosomal subunit.

Functionally, this protein binds specifically to 23S rRNA; its binding is stimulated by other ribosomal proteins, e.g. L4, L17, and L20. It is important during the early stages of 50S assembly. It makes multiple contacts with different domains of the 23S rRNA in the assembled 50S subunit and ribosome. The globular domain of the protein is located near the polypeptide exit tunnel on the outside of the subunit, while an extended beta-hairpin is found that lines the wall of the exit tunnel in the center of the 70S ribosome. In Hydrogenovibrio crunogenus (strain DSM 25203 / XCL-2) (Thiomicrospira crunogena), this protein is Large ribosomal subunit protein uL22.